A 129-amino-acid polypeptide reads, in one-letter code: Profilin-4 (129 aa).

This sequence belongs to the profilin family. Expressed in testis, in germ cells in seminiferous tubules (at protein level).

It is found in the cytoplasm. In terms of biological role, involved in male fertility. Required for manchette development and acrosome biogenesis during spermiogenesis. Binds in vitro to phospholipids, including phosphatidylinositol 3-phosphate (PtdIns(3)P), phosphatidylinositol 4,5-bisphosphate (PtdIns(4,5)P2), phosphatidylinositol 4-phosphate (PtdIns(4)P) and phosphatidic acid (PA). Contrary to other profilin family members, does not bind to actin in vitro. The chain is Profilin-4 (Pfn4) from Mus musculus (Mouse).